Reading from the N-terminus, the 126-residue chain is Small ribosomal subunit protein bS6 (126 aa).

The interval 104–126 (QGAEKGKSSSKKVAAEAEASEEA) is disordered.

It belongs to the bacterial ribosomal protein bS6 family.

Functionally, binds together with bS18 to 16S ribosomal RNA. This chain is Small ribosomal subunit protein bS6, found in Coxiella burnetii (strain Dugway 5J108-111).